A 648-amino-acid polypeptide reads, in one-letter code: GLAMAWAVLGPLLWGCALALQGGMLYPRESQSRERKELDGLWSFRADFSDNRRRGFEEQWYRRPLRESGPTLDMPVPSSFNDISQDWRLRHFVGWVWYEREVILPERWTQDLSTRVVLRIGSAHAYAIVWVNGVHTLEHEGGYLPFEADISNLVQVGPLSSHVRITIAINNTLTSTTLPPGTIQYLTDISKYPKGYFIQNTYFDFFNYAGLQRSVLLYTTPTAYIDDITVTTGVEHDTGLVNYQISVKGSNLFELEVRLLDAENKLVANGTGIQGQLKVPGARLWWPYLMHERPAYLYSLEVRLTAQTSLGPVSDFYTLPVGIRTVAVTESQFLINGKPFYFHGVNKHEDADIRGKGFDWPLLVKDFNLLRWLGANAFRTSHYPYAEEVLQMCDRYGIVVIDECPGVGLALPQFFNNVSLQNHMRVMEEVVRRDKNHPAVVMWSVANEPASHLESAGYYLKMVITHTKALDPSRPVTFVTNSNYAADKGAPYVDVICLNSYYSWYHDYGHLELIQRQLTTQFENWYKTYQKPIIQSEYGAETIVGFHQDPPLMFTEEYQKSLLEQYHVVLDQKRRKYVVGELIWNFADFMTEQSPTRVLGNKKGVFTRQRQPKSAAFLLRERYWKIANETRYPHSIAKSQCLENSPFT.

The N-terminal stretch at Gly-1–Ala-19 is a signal peptide. Residues Asn-170, Asn-269, and Asn-417 are each glycosylated (N-linked (GlcNAc...) asparagine). The Proton donor role is filled by Glu-448. Residue Asn-628 is glycosylated (N-linked (GlcNAc...) asparagine).

It belongs to the glycosyl hydrolase 2 family. In terms of assembly, homotetramer.

Its subcellular location is the lysosome. It catalyses the reaction a beta-D-glucuronoside + H2O = D-glucuronate + an alcohol. With respect to regulation, inhibited by L-aspartic acid. Functionally, plays an important role in the degradation of dermatan and keratan sulfates. This is Beta-glucuronidase (GUSB) from Chlorocebus aethiops (Green monkey).